Consider the following 383-residue polypeptide: 8-amino-7-oxononanoate synthase (383 aa).

Arg-21 contributes to the substrate binding site. 108-109 serves as a coordination point for pyridoxal 5'-phosphate; sequence GF. His-133 contacts substrate. Residues Ser-179, His-207, and Thr-233 each contribute to the pyridoxal 5'-phosphate site. Residue Lys-236 is modified to N6-(pyridoxal phosphate)lysine. Thr-350 contributes to the substrate binding site.

The protein belongs to the class-II pyridoxal-phosphate-dependent aminotransferase family. BioF subfamily. As to quaternary structure, homodimer. Requires pyridoxal 5'-phosphate as cofactor.

It carries out the reaction 6-carboxyhexanoyl-[ACP] + L-alanine + H(+) = (8S)-8-amino-7-oxononanoate + holo-[ACP] + CO2. Its pathway is cofactor biosynthesis; biotin biosynthesis. Its function is as follows. Catalyzes the decarboxylative condensation of pimeloyl-[acyl-carrier protein] and L-alanine to produce 8-amino-7-oxononanoate (AON), [acyl-carrier protein], and carbon dioxide. The polypeptide is 8-amino-7-oxononanoate synthase (Yersinia enterocolitica serotype O:8 / biotype 1B (strain NCTC 13174 / 8081)).